The following is a 430-amino-acid chain: Probable histidine--tRNA ligase, cytoplasmic (430 aa).

Belongs to the class-II aminoacyl-tRNA synthetase family.

The protein localises to the cytoplasm. The enzyme catalyses tRNA(His) + L-histidine + ATP = L-histidyl-tRNA(His) + AMP + diphosphate + H(+). The chain is Probable histidine--tRNA ligase, cytoplasmic from Vairimorpha ceranae (strain BRL01) (Microsporidian parasite).